A 459-amino-acid polypeptide reads, in one-letter code: Cysteine--tRNA ligase (459 aa).

Residue Cys29 participates in Zn(2+) binding. The 'HIGH' region motif lies at Pro31 to Asn41. Residues Cys209, His234, and Glu238 each coordinate Zn(2+). A 'KMSKS' region motif is present at residues Lys266 to Ser270. Lys269 provides a ligand contact to ATP.

This sequence belongs to the class-I aminoacyl-tRNA synthetase family. In terms of assembly, monomer. The cofactor is Zn(2+).

It is found in the cytoplasm. The enzyme catalyses tRNA(Cys) + L-cysteine + ATP = L-cysteinyl-tRNA(Cys) + AMP + diphosphate. This is Cysteine--tRNA ligase from Paramagnetospirillum magneticum (strain ATCC 700264 / AMB-1) (Magnetospirillum magneticum).